Reading from the N-terminus, the 351-residue chain is 1-acylglycerol-3-phosphate O-acyltransferase ABHD5 (351 aa).

The 106-residue stretch at 79–184 folds into the AB hydrolase-1 domain; that stretch reads PLVLLHGFGG…LILVEPWGFP (106 aa). Ser-124 is subject to Phosphoserine. An HXXXXD motif motif is present at residues 329 to 334; it reads HYVYAD.

It belongs to the peptidase S33 family. ABHD4/ABHD5 subfamily. As to quaternary structure, interacts with ADRP. Interacts with PLIN. Interacts with and PNPLA2. Interacts with PLIN5; promotes interaction with PNPLA2. As to expression, highly expressed in the adipose tissue and testes. Weakly expressed in the liver, muscle, kidney, and heart. Expressed by upper epidermal layers and dermal fibroblasts in skin, hepatocytes and hypothalamus in brain (at protein level).

The protein localises to the cytoplasm. The protein resides in the lipid droplet. Its subcellular location is the cytosol. The enzyme catalyses a 1-acyl-sn-glycero-3-phosphate + an acyl-CoA = a 1,2-diacyl-sn-glycero-3-phosphate + CoA. The catalysed reaction is 1-(9Z-octadecenoyl)-sn-glycero-3-phosphate + (9Z)-octadecenoyl-CoA = 1,2-di-(9Z-octadecenoyl)-sn-glycero-3-phosphate + CoA. It carries out the reaction 1-(9Z-octadecenoyl)-sn-glycero-3-phosphate + hexadecanoyl-CoA = 1-(9Z)-octadecenoyl-2-hexadecanoyl-sn-glycero-3-phosphate + CoA. It catalyses the reaction 1-(9Z-octadecenoyl)-sn-glycero-3-phosphate + octadecanoyl-CoA = 1-(9Z-octadecenoyl)-2-octadecanoyl-sn-glycero-3-phosphate + CoA. The enzyme catalyses 1-(9Z-octadecenoyl)-sn-glycero-3-phosphate + (5Z,8Z,11Z,14Z)-eicosatetraenoyl-CoA = 1-(9Z)-octadecenoyl-2-(5Z,8Z,11Z,14Z)-eicosatetraenoyl-sn-glycero-3-phosphate + CoA. The catalysed reaction is eicosanoyl-CoA + 1-(9Z-octadecenoyl)-sn-glycero-3-phosphate = 1-(9Z)-octadecenoyl-2-eicosanoyl-sn-glycero-3-phosphate + CoA. It carries out the reaction 1-hexadecanoyl-sn-glycero-3-phosphate + (9Z)-octadecenoyl-CoA = 1-hexadecanoyl-2-(9Z-octadecenoyl)-sn-glycero-3-phosphate + CoA. It catalyses the reaction 1-octadecanoyl-sn-glycero-3-phosphate + (9Z)-octadecenoyl-CoA = 1-octadecanoyl-2-(9Z-octadecenoyl)-sn-glycero-3-phosphate + CoA. The enzyme catalyses 1-(5Z,8Z,11Z,14Z-eicosatetraenoyl)-sn-glycero-3-phosphate + (9Z)-octadecenoyl-CoA = 1-(5Z,8Z,11Z,14Z)-eicosatetraenoyl-2-(9Z)-octadecenoyl-sn-glycero-3-phosphate + CoA. With respect to regulation, acyltransferase activity is inhibited by detergents such as Triton X-100 and 3-[(3-cholamidopropyl)dimethylammonio]-1-propanesulfonate (CHAPS). Acyltransferase activity is inhibited by the presence of magnesium and calcium. Its function is as follows. Coenzyme A-dependent lysophosphatidic acid acyltransferase that catalyzes the transfer of an acyl group on a lysophosphatidic acid. Functions preferentially with 1-oleoyl-lysophosphatidic acid followed by 1-palmitoyl-lysophosphatidic acid, 1-stearoyl-lysophosphatidic acid and 1-arachidonoyl-lysophosphatidic acid as lipid acceptor. Functions preferentially with arachidonoyl-CoA followed by oleoyl-CoA as acyl group donors. Functions in phosphatidic acid biosynthesis. May regulate the cellular storage of triacylglycerol through activation of the phospholipase PNPLA2. Involved in keratinocyte differentiation. Regulates lipid droplet fusion. This is 1-acylglycerol-3-phosphate O-acyltransferase ABHD5 from Mus musculus (Mouse).